The following is a 157-amino-acid chain: Small ribosomal subunit protein uS7 (157 aa).

It belongs to the universal ribosomal protein uS7 family. In terms of assembly, part of the 30S ribosomal subunit. Contacts proteins S9 and S11.

Its function is as follows. One of the primary rRNA binding proteins, it binds directly to 16S rRNA where it nucleates assembly of the head domain of the 30S subunit. Is located at the subunit interface close to the decoding center, probably blocks exit of the E-site tRNA. The sequence is that of Small ribosomal subunit protein uS7 from Caldicellulosiruptor saccharolyticus (strain ATCC 43494 / DSM 8903 / Tp8T 6331).